Reading from the N-terminus, the 782-residue chain is Protein phosphatase 1 regulatory subunit 12C (782 aa).

Low complexity-rich tracts occupy residues 1-19 and 77-88; these read MSGE…AAAA and DPGPGSGAASDP. 2 disordered regions span residues 1–45 and 77–98; these read MSGE…GERR and DPGP…RAVL. The residue at position 2 (serine 2) is an N-acetylserine. ANK repeat units lie at residues 104-133, 137-166, 230-259, and 263-292; these read DGIS…TVNQ, EGWT…NIAA, TGAS…DTEL, and DGWT…GMDS. Residues 301–332 are a coiled coil; the sequence is CDLADEDVMNLLEELAQKQEDLRNQKEGSQGR. A disordered region spans residues 321 to 685; the sequence is DLRNQKEGSQ…HEEPDGGFRK (365 aa). Polar residues predominate over residues 332 to 341; it reads RGQESQVPSS. The segment covering 353-369 has biased composition (basic and acidic residues); sequence SSREKISLQDLSKERRP. The span at 401–413 shows a compositional bias: low complexity; that stretch reads VSSPVSSNPKSPV. Serine 403, serine 411, serine 431, serine 454, and serine 509 each carry phosphoserine. The segment covering 451–465 has biased composition (polar residues); sequence RSASSSLLEKASTQA. Basic and acidic residues predominate over residues 537–546; that stretch reads VRDEESESQR. A compositionally biased stretch (basic residues) spans 547–557; that stretch reads KARSRLMRQSR. Phosphothreonine is present on threonine 560. Serine 647 is subject to Phosphoserine. The segment covering 664–685 has biased composition (basic and acidic residues); the sequence is SQRDLVLESKQEHEEPDGGFRK. The stretch at 681 to 782 forms a coiled coil; the sequence is GGFRKMYTEL…LIRVISKLSK (102 aa).

In terms of assembly, PP1 comprises a catalytic subunit, PPP1CA, PPP1CB or PPP1CC, and one or several targeting or regulatory subunits. PPP1R12C mediates binding to myosin. Interacts via its N-terminus with PPP1CB. Interacts with IL16. Interacts with the coiled-coil domain of MPRIP. Interacts with NOD2. In terms of processing, phosphorylation at Thr-560 is essential for its interaction with PPP1CB.

The protein resides in the cytoplasm. It is found in the cytoskeleton. The protein localises to the stress fiber. In terms of biological role, regulates myosin phosphatase activity. The chain is Protein phosphatase 1 regulatory subunit 12C from Mus musculus (Mouse).